The primary structure comprises 200 residues: Ribonuclease HII (200 aa).

The region spanning 11–200 (QSIAGVDEVG…VRRALISLTG (190 aa)) is the RNase H type-2 domain. Residues Asp-17, Glu-18, and Asp-109 each contribute to the a divalent metal cation site.

The protein belongs to the RNase HII family. Requires Mn(2+) as cofactor. It depends on Mg(2+) as a cofactor.

It is found in the cytoplasm. It carries out the reaction Endonucleolytic cleavage to 5'-phosphomonoester.. Endonuclease that specifically degrades the RNA of RNA-DNA hybrids. The protein is Ribonuclease HII of Hamiltonella defensa subsp. Acyrthosiphon pisum (strain 5AT).